A 687-amino-acid chain; its full sequence is Glycine--tRNA ligase beta subunit (687 aa).

It belongs to the class-II aminoacyl-tRNA synthetase family. Tetramer of two alpha and two beta subunits.

Its subcellular location is the cytoplasm. It carries out the reaction tRNA(Gly) + glycine + ATP = glycyl-tRNA(Gly) + AMP + diphosphate. This Neisseria meningitidis serogroup C / serotype 2a (strain ATCC 700532 / DSM 15464 / FAM18) protein is Glycine--tRNA ligase beta subunit.